The primary structure comprises 753 residues: Catalase-peroxidase (753 aa).

A cross-link (tryptophyl-tyrosyl-methioninium (Trp-Tyr) (with M-269)) is located at residues 91-243; the sequence is WHSAGTYRIG…LGAVQMGLIY (153 aa). Catalysis depends on His92, which acts as the Proton acceptor. The tryptophyl-tyrosyl-methioninium (Tyr-Met) (with W-91) cross-link spans 243–269; sequence YVNPEGPDGNPDPLAAAHDIRETFARM. His284 contacts heme b.

The protein belongs to the peroxidase family. Peroxidase/catalase subfamily. In terms of assembly, homodimer or homotetramer. The cofactor is heme b. In terms of processing, formation of the three residue Trp-Tyr-Met cross-link is important for the catalase, but not the peroxidase activity of the enzyme.

The catalysed reaction is H2O2 + AH2 = A + 2 H2O. It catalyses the reaction 2 H2O2 = O2 + 2 H2O. Bifunctional enzyme with both catalase and broad-spectrum peroxidase activity. The protein is Catalase-peroxidase of Paraburkholderia xenovorans (strain LB400).